Reading from the N-terminus, the 361-residue chain is Phospho-N-acetylmuramoyl-pentapeptide-transferase (361 aa).

10 helical membrane passes run 21 to 41, 73 to 93, 97 to 117, 134 to 154, 168 to 188, 200 to 220, 237 to 257, 264 to 284, 289 to 309, and 338 to 358; these read YITL…FLVG, TMGG…WADL, FVWV…VDDW, YFWQ…TATV, LVLP…IVGT, GLAI…AYVA, AGEL…FLWF, VFMG…VAVI, IVLF…MLQV, and QVVV…LSTL.

Belongs to the glycosyltransferase 4 family. MraY subfamily. It depends on Mg(2+) as a cofactor.

It is found in the cell inner membrane. It catalyses the reaction UDP-N-acetyl-alpha-D-muramoyl-L-alanyl-gamma-D-glutamyl-meso-2,6-diaminopimeloyl-D-alanyl-D-alanine + di-trans,octa-cis-undecaprenyl phosphate = di-trans,octa-cis-undecaprenyl diphospho-N-acetyl-alpha-D-muramoyl-L-alanyl-D-glutamyl-meso-2,6-diaminopimeloyl-D-alanyl-D-alanine + UMP. It participates in cell wall biogenesis; peptidoglycan biosynthesis. Functionally, catalyzes the initial step of the lipid cycle reactions in the biosynthesis of the cell wall peptidoglycan: transfers peptidoglycan precursor phospho-MurNAc-pentapeptide from UDP-MurNAc-pentapeptide onto the lipid carrier undecaprenyl phosphate, yielding undecaprenyl-pyrophosphoryl-MurNAc-pentapeptide, known as lipid I. The polypeptide is Phospho-N-acetylmuramoyl-pentapeptide-transferase (Methylobacillus flagellatus (strain ATCC 51484 / DSM 6875 / VKM B-1610 / KT)).